Consider the following 989-residue polypeptide: Phosphoenolpyruvate carboxylase (989 aa).

Catalysis depends on residues His175 and Lys630.

The protein belongs to the PEPCase type 1 family. Mg(2+) serves as cofactor.

It carries out the reaction oxaloacetate + phosphate = phosphoenolpyruvate + hydrogencarbonate. Forms oxaloacetate, a four-carbon dicarboxylic acid source for the tricarboxylic acid cycle. The protein is Phosphoenolpyruvate carboxylase of Prochlorococcus marinus (strain AS9601).